A 474-amino-acid polypeptide reads, in one-letter code: Glycogen synthase (474 aa).

K15 lines the ADP-alpha-D-glucose pocket.

This sequence belongs to the glycosyltransferase 1 family. Bacterial/plant glycogen synthase subfamily.

It catalyses the reaction [(1-&gt;4)-alpha-D-glucosyl](n) + ADP-alpha-D-glucose = [(1-&gt;4)-alpha-D-glucosyl](n+1) + ADP + H(+). It functions in the pathway glycan biosynthesis; glycogen biosynthesis. Its function is as follows. Synthesizes alpha-1,4-glucan chains using ADP-glucose. The protein is Glycogen synthase of Chlamydia trachomatis serovar D (strain ATCC VR-885 / DSM 19411 / UW-3/Cx).